The chain runs to 267 residues: Phosphate import ATP-binding protein PstB 1 (267 aa).

Positions 21–262 (LETKDLHVYY…AALQSTSDYV (242 aa)) constitute an ABC transporter domain. 53 to 60 (GPSGCGKS) is a binding site for ATP.

It belongs to the ABC transporter superfamily. Phosphate importer (TC 3.A.1.7) family. As to quaternary structure, the complex is composed of two ATP-binding proteins (PstB), two transmembrane proteins (PstC and PstA) and a solute-binding protein (PstS).

The protein resides in the cell membrane. It catalyses the reaction phosphate(out) + ATP + H2O = ADP + 2 phosphate(in) + H(+). Its function is as follows. Part of the ABC transporter complex PstSACB involved in phosphate import. Responsible for energy coupling to the transport system. The sequence is that of Phosphate import ATP-binding protein PstB 1 from Streptococcus thermophilus (strain CNRZ 1066).